A 546-amino-acid polypeptide reads, in one-letter code: Alkaline phosphatase PafA (546 aa).

A signal peptide spans 1 to 25 (MLTPKKWLLGVLVVSGMLGAQKTNA). Asp-38 and Thr-79 together coordinate Zn(2+). The active-site Phosphothreonine intermediate is the Thr-79. Substrate contacts are provided by residues Asn-100 and 162–164 (KDR). Residues Asp-305, His-309, Asp-352, His-353, and His-486 each contribute to the Zn(2+) site.

It depends on Zn(2+) as a cofactor.

It is found in the periplasm. It carries out the reaction a phosphate monoester + H2O = an alcohol + phosphate. Strongly inhibited by orthovanadate and EDTA. Also inhibited by inorganic phosphate. Functionally, alkaline phosphatase with broad substrate specificity. Has phosphatase activity towards nucleotide phosphates with a preference for ATP. Active towards a great variety of phosphomonoesters with the exception of 2',3'-cyclic AMP and myo-inositol hexakisphosphate. The chain is Alkaline phosphatase PafA from Elizabethkingia meningoseptica (Chryseobacterium meningosepticum).